The primary structure comprises 388 residues: D-xylose dehydrogenase (388 aa).

This sequence belongs to the Gfo/Idh/MocA family. In terms of assembly, homotetramer. It depends on Zn(2+) as a cofactor.

It carries out the reaction D-xylose + NADP(+) = D-xylono-1,5-lactone + NADPH + H(+). The enzyme catalyses D-xylose + NAD(+) = D-xylono-1,5-lactone + NADH + H(+). It functions in the pathway carbohydrate metabolism; D-xylose degradation. In terms of biological role, catalyzes the NADP(+)-dependent oxidation of D-xylose. Is able to use both NADP(+) and NAD(+); however, the enzyme shows a very strong preference for NADP(+). Is likely involved in the first step of the oxidative D-xylose degradation pathway. This is D-xylose dehydrogenase (xdh) from Paenarthrobacter nicotinovorans (Arthrobacter nicotinovorans).